Reading from the N-terminus, the 185-residue chain is uncharacterized protein (185 aa).

2 consecutive transmembrane segments (helical) span residues 1-21 (MMKF…LTPE) and 111-131 (FLWI…AFAW).

It to A.aeolicus aq_1900.

It is found in the cell membrane. This is an uncharacterized protein from Aquifex aeolicus (strain VF5).